A 559-amino-acid polypeptide reads, in one-letter code: Glutamine--tRNA ligase (559 aa).

Residues 44–54 carry the 'HIGH' region motif; the sequence is PEPNGYLHIGH. Residues 45-47 and 51-57 contribute to the ATP site; these read EPN and HIGHAKS. L-glutamine contacts are provided by Asp77 and Tyr222. ATP is bound by residues Thr241 and 272–273; that span reads RL. The short motif at 279 to 283 is the 'KMSKS' region element; that stretch reads LTSKR.

This sequence belongs to the class-I aminoacyl-tRNA synthetase family. As to quaternary structure, monomer.

It is found in the cytoplasm. It catalyses the reaction tRNA(Gln) + L-glutamine + ATP = L-glutaminyl-tRNA(Gln) + AMP + diphosphate. This is Glutamine--tRNA ligase from Pasteurella multocida (strain Pm70).